The sequence spans 403 residues: Acetate kinase (403 aa).

Asn-8 contributes to the Mg(2+) binding site. Lys-15 contacts ATP. Arg-90 is a binding site for substrate. Asp-147 (proton donor/acceptor) is an active-site residue. ATP is bound by residues 207-211, 282-284, and 330-334; these read HLGSG, DLR, and GVGEN. Mg(2+) is bound at residue Glu-384.

The protein belongs to the acetokinase family. As to quaternary structure, homodimer. The cofactor is Mg(2+). Mn(2+) is required as a cofactor.

It localises to the cytoplasm. It carries out the reaction acetate + ATP = acetyl phosphate + ADP. Its pathway is metabolic intermediate biosynthesis; acetyl-CoA biosynthesis; acetyl-CoA from acetate: step 1/2. Catalyzes the formation of acetyl phosphate from acetate and ATP. Can also catalyze the reverse reaction. The sequence is that of Acetate kinase from Exiguobacterium sibiricum (strain DSM 17290 / CCUG 55495 / CIP 109462 / JCM 13490 / 255-15).